The sequence spans 108 residues: Nucleoid-associated protein Mpe_A2533 (108 aa).

Residues threonine 86–phenylalanine 108 are disordered. Pro residues predominate over residues proline 99 to phenylalanine 108.

It belongs to the YbaB/EbfC family. Homodimer.

Its subcellular location is the cytoplasm. The protein localises to the nucleoid. Functionally, binds to DNA and alters its conformation. May be involved in regulation of gene expression, nucleoid organization and DNA protection. In Methylibium petroleiphilum (strain ATCC BAA-1232 / LMG 22953 / PM1), this protein is Nucleoid-associated protein Mpe_A2533.